The following is a 268-amino-acid chain: LOB domain-containing protein 22 (268 aa).

Residues 1–31 form a disordered region; it reads MPSGKPSSVFPLHPKPTPLKPSSSTSSSNNN. The span at 22–31 shows a compositional bias: low complexity; the sequence is SSSTSSSNNN. The LOB domain maps to 35–136; that stretch reads QACAACKYQR…NELEIVLQQL (102 aa).

This sequence belongs to the LOB domain-containing protein family.

The protein is LOB domain-containing protein 22 (LBD22) of Arabidopsis thaliana (Mouse-ear cress).